A 976-amino-acid polypeptide reads, in one-letter code: DNA-directed RNA polymerase 1, mitochondrial (976 aa).

The N-terminal 42 residues, Met1–Ser42, are a transit peptide targeting the mitochondrion. Active-site residues include Asp677, Lys752, and Asp909.

Belongs to the phage and mitochondrial RNA polymerase family.

The protein localises to the mitochondrion. It carries out the reaction RNA(n) + a ribonucleoside 5'-triphosphate = RNA(n+1) + diphosphate. Functionally, DNA-dependent RNA polymerase catalyzes the transcription of DNA into RNA using the four ribonucleoside triphosphates as substrates. This is DNA-directed RNA polymerase 1, mitochondrial (RPOT1) from Arabidopsis thaliana (Mouse-ear cress).